A 499-amino-acid chain; its full sequence is Probable malate:quinone oxidoreductase 4 (499 aa).

The protein belongs to the MQO family. It depends on FAD as a cofactor.

It carries out the reaction (S)-malate + a quinone = a quinol + oxaloacetate. Its pathway is carbohydrate metabolism; tricarboxylic acid cycle; oxaloacetate from (S)-malate (quinone route): step 1/1. The protein is Probable malate:quinone oxidoreductase 4 of Staphylococcus epidermidis (strain ATCC 35984 / DSM 28319 / BCRC 17069 / CCUG 31568 / BM 3577 / RP62A).